Consider the following 122-residue polypeptide: Basic phospholipase A2 CbII (122 aa).

Intrachain disulfides connect Cys26-Cys115, Cys28-Cys44, Cys43-Cys95, Cys49-Cys122, Cys50-Cys88, Cys57-Cys81, and Cys75-Cys86. Ca(2+)-binding residues include Tyr27, Gly29, and Gly31. His47 is a catalytic residue. Asp48 is a Ca(2+) binding site. Residue Asp89 is part of the active site.

Belongs to the phospholipase A2 family. Group I subfamily. D49 sub-subfamily. As to quaternary structure, heterodimer of an acidic subunit (CbIalpha or CbIbeta) and a basic subunit (CbII). The acidic subunit is non-toxic, and increases the toxicity of the basic subunit. Ca(2+) is required as a cofactor. In terms of tissue distribution, expressed by the venom gland.

It is found in the secreted. It carries out the reaction a 1,2-diacyl-sn-glycero-3-phosphocholine + H2O = a 1-acyl-sn-glycero-3-phosphocholine + a fatty acid + H(+). In terms of biological role, heterodimer: presynaptic neurotoxin. Monomer: Snake venom phospholipase A2 (PLA2) that exhibits strong anticoagulant effects by binding to factor Xa (F10) and inhibiting the prothrombinase activity (IC(50) is 20 nM). PLA2 catalyzes the calcium-dependent hydrolysis of the 2-acyl groups in 3-sn-phosphoglycerides. This is Basic phospholipase A2 CbII from Pseudocerastes fieldi (Field's horned viper).